The chain runs to 413 residues: Glutaminase (413 aa).

The glutaminase stretch occupies residues 23–307 (GELADYIPEL…LSDDMGLHLM (285 aa)). Residues serine 65, asparagine 114, glutamate 160, asparagine 167, tyrosine 191, tyrosine 243, and valine 261 each contribute to the substrate site. In terms of domain architecture, STAS spans 316–413 (AVRSITRDGD…SDGTICKERV (98 aa)).

This sequence belongs to the glutaminase family. Homotetramer.

It catalyses the reaction L-glutamine + H2O = L-glutamate + NH4(+). This Corynebacterium glutamicum (strain ATCC 13032 / DSM 20300 / JCM 1318 / BCRC 11384 / CCUG 27702 / LMG 3730 / NBRC 12168 / NCIMB 10025 / NRRL B-2784 / 534) protein is Glutaminase (glsA).